Here is a 23-residue protein sequence, read N- to C-terminus: 48 kDa cell wall protein (23 aa).

It localises to the secreted. The protein resides in the cell wall. In Nicotiana tabacum (Common tobacco), this protein is 48 kDa cell wall protein.